The chain runs to 450 residues: Zinc finger protein 446 (450 aa).

The SCAN box domain maps to 26–108 (RLRFRGFCYQ…ALVEGLQHDP (83 aa)). Residue K130 forms a Glycyl lysine isopeptide (Lys-Gly) (interchain with G-Cter in SUMO2) linkage. Disordered stretches follow at residues 130–155 (KTEE…QDTR) and 168–205 (EEPN…SFHP). S137 carries the post-translational modification Phosphoserine. The 47-residue stretch at 208 to 254 (IQEEWGLLDRSQKELYWDAMLEKYGTVVSLGLPPHQPEAQAQSELGM) folds into the KRAB domain. The residue at position 218 (S218) is a Phosphoserine. Disordered regions lie at residues 263-331 (RSLR…PRKP) and 354-389 (HTSG…RRSL). The span at 275-286 (PGCPEAQPPQGP) shows a compositional bias: pro residues. Residues 287 to 306 (GPAAWEGLSGAATPAPTVRP) are compositionally biased toward low complexity. At T308 the chain carries Phosphothreonine. A Glycyl lysine isopeptide (Lys-Gly) (interchain with G-Cter in SUMO2) cross-link involves residue K330. C2H2-type zinc fingers lie at residues 332-359 (YTCE…SGPG), 395-422 (YPCE…GQRR), and 423-450 (HFCS…PEVP).

The protein belongs to the krueppel C2H2-type zinc-finger protein family.

It localises to the nucleus. Functionally, may be involved in transcriptional regulation. This chain is Zinc finger protein 446 (ZNF446), found in Homo sapiens (Human).